A 241-amino-acid polypeptide reads, in one-letter code: MSPASSWKRKRPSSSSAQASKKRRVYRPAVSRSLARREPLQVQDFVWDTDVAFNRGGGCYLLTSYARGSAENQRKTAETITYKVAVNLGCAISGTMQQYCISSRPVCWIVYDAAPTGSAVTPKDIFGYPEGLVNWPTTWKVARAVSHRFIVKRRWVFTMESNGSRFDRDYTNLPAAIPQSLPVLNKFAKQLGVRTEWKNAEGGDFGDIKSGALYLVMAPANGAVFVARGNVRVYFKSVGNQ.

The Bipartite nuclear localization signal motif lies at 1 to 26; sequence MSPASSWKRKRPSSSSAQASKKRRVY. Residues 1–30 are disordered; that stretch reads MSPASSWKRKRPSSSSAQASKKRRVYRPAV.

This sequence belongs to the geminiviridae capsid protein family. In terms of assembly, homomultimer. Interacts with the movement protein. Binds to single-stranded and double-stranded viral DNA.

The protein localises to the virion. The protein resides in the host nucleus. In terms of biological role, encapsidates the viral genome into characteristic twinned ('geminate') particles. Binds the genomic viral ssDNA and shuttles it into and out of the cell nucleus. Plays a role in protection of the genome from degradation, virus acquisition and transmission by insect vectors, infectivity, and systemic movement. The CP of monopartite geminiviruses is absolutely essential for virus movement. The chain is Capsid protein from Avena sativa (Oat).